Reading from the N-terminus, the 215-residue chain is ATP phosphoribosyltransferase (215 aa).

It belongs to the ATP phosphoribosyltransferase family. Short subfamily. As to quaternary structure, heteromultimer composed of HisG and HisZ subunits.

The protein localises to the cytoplasm. It carries out the reaction 1-(5-phospho-beta-D-ribosyl)-ATP + diphosphate = 5-phospho-alpha-D-ribose 1-diphosphate + ATP. Its pathway is amino-acid biosynthesis; L-histidine biosynthesis; L-histidine from 5-phospho-alpha-D-ribose 1-diphosphate: step 1/9. Its function is as follows. Catalyzes the condensation of ATP and 5-phosphoribose 1-diphosphate to form N'-(5'-phosphoribosyl)-ATP (PR-ATP). Has a crucial role in the pathway because the rate of histidine biosynthesis seems to be controlled primarily by regulation of HisG enzymatic activity. This is ATP phosphoribosyltransferase (hisG) from Clostridium acetobutylicum (strain ATCC 824 / DSM 792 / JCM 1419 / IAM 19013 / LMG 5710 / NBRC 13948 / NRRL B-527 / VKM B-1787 / 2291 / W).